The chain runs to 468 residues: Sulfate adenylyltransferase subunit 1 (468 aa).

In terms of domain architecture, tr-type G spans 22–239 (KELLRFLTCG…TVEIASDKNA (218 aa)). The interval 31–38 (GSVDDGKS) is G1. 31 to 38 (GSVDDGKS) serves as a coordination point for GTP. The tract at residues 89–93 (GITID) is G2. The tract at residues 110–113 (DTPG) is G3. Residues 110–114 (DTPGH) and 165–168 (NKMD) contribute to the GTP site. The tract at residues 165–168 (NKMD) is G4. The segment at 202-204 (SAL) is G5.

This sequence belongs to the TRAFAC class translation factor GTPase superfamily. Classic translation factor GTPase family. CysN/NodQ subfamily. In terms of assembly, heterodimer composed of CysD, the smaller subunit, and CysN.

It carries out the reaction sulfate + ATP + H(+) = adenosine 5'-phosphosulfate + diphosphate. The protein operates within sulfur metabolism; hydrogen sulfide biosynthesis; sulfite from sulfate: step 1/3. Its function is as follows. With CysD forms the ATP sulfurylase (ATPS) that catalyzes the adenylation of sulfate producing adenosine 5'-phosphosulfate (APS) and diphosphate, the first enzymatic step in sulfur assimilation pathway. APS synthesis involves the formation of a high-energy phosphoric-sulfuric acid anhydride bond driven by GTP hydrolysis by CysN coupled to ATP hydrolysis by CysD. The chain is Sulfate adenylyltransferase subunit 1 from Teredinibacter turnerae (strain ATCC 39867 / T7901).